Consider the following 334-residue polypeptide: Thioredoxin reductase (334 aa).

FAD is bound by residues 10-13, 39-40, Gln-44, Asn-53, Val-86, Cys-143, Asp-287, and 294-296; these read SGPA, IA, and RQA. The cysteines at positions 140 and 143 are disulfide-linked.

Belongs to the class-II pyridine nucleotide-disulfide oxidoreductase family. As to quaternary structure, homodimer. It depends on FAD as a cofactor.

The protein resides in the cytoplasm. It carries out the reaction [thioredoxin]-dithiol + NADP(+) = [thioredoxin]-disulfide + NADPH + H(+). The polypeptide is Thioredoxin reductase (cys-9) (Neurospora crassa (strain ATCC 24698 / 74-OR23-1A / CBS 708.71 / DSM 1257 / FGSC 987)).